The following is an 810-amino-acid chain: Protein kinase C-binding protein NELL1 (810 aa).

The signal sequence occupies residues 1–21; the sequence is MPMDLILVVWFCVCTARTVVG. Asn40, Asn53, Asn83, Asn224, Asn294, and Asn372 each carry an N-linked (GlcNAc...) asparagine glycan. The region spanning 64–227 is the Laminin G-like domain; the sequence is EREIHAAPHV…TQCPNLNHTC (164 aa). Positions 271-332 constitute a VWFC 1 domain; that stretch reads KTCQVSGLLY…IAGQCCKVCR (62 aa). 3 disulfide bridges follow: Cys395–Cys407, Cys401–Cys416, and Cys418–Cys432. The Ca(2+) site is built by Asp434, Ile435, and Glu437. The EGF-like 1; calcium-binding domain occupies 434-475; the sequence is DIDECAAKMHYCHANTVCVNLPGLYRCDCVPGYIRVDDFSCT. Disulfide bonds link Cys438/Cys451, Cys445/Cys460, Cys462/Cys474, Cys480/Cys493, Cys487/Cys502, Cys504/Cys515, Cys519/Cys529, Cys523/Cys535, Cys537/Cys546, Cys553/Cys566, Cys560/Cys575, Cys577/Cys594, Cys600/Cys613, Cys607/Cys622, and Cys624/Cys630. Ca(2+) contacts are provided by Asn453, Leu454, and Leu457. An EGF-like 2; calcium-binding domain is found at 476–516; that stretch reads EHDECGSGQHNCDENAICTNTVQGHSCTCKPGYVGNGTICR. Asn511 carries an N-linked (GlcNAc...) asparagine glycan. One can recognise an EGF-like 3 domain in the interval 517-547; it reads AFCEEGCRYGGTCVAPNKCVCPSGFTGSHCE. The region spanning 549 to 587 is the EGF-like 4; calcium-binding domain; that stretch reads DIDECSEGIIECHNHSRCVNLPGWYHCECRSGFHDDGTY. N-linked (GlcNAc...) asparagine glycosylation occurs at Asn562. An EGF-like 5; calcium-binding domain is found at 596–631; sequence DIDECALRTHTCWNDSACINLAGGFDCLCPSGPSCS. N-linked (GlcNAc...) asparagine glycosylation occurs at Asn609. A VWFC 2 domain is found at 692 to 750; sequence SQCLDQNGHKLYRSGDNWTHSCQQCRCLEGEVDCWPLTCPNLSCEYTAILEGECCPRCV. Residues Asn708, Asn732, and Asn758 are each glycosylated (N-linked (GlcNAc...) asparagine).

In terms of assembly, homotrimer. Binds to PKC beta-1. Interacts with ATRAID; the interaction promotes osteoblast cell differentiation and mineralization. Interacts with ROBO3.

It is found in the cytoplasm. The protein localises to the nucleus envelope. The protein resides in the secreted. In terms of biological role, plays a role in the control of cell growth and differentiation. Promotes osteoblast cell differentiation and terminal mineralization. The sequence is that of Protein kinase C-binding protein NELL1 (NELL1) from Homo sapiens (Human).